A 202-amino-acid chain; its full sequence is V-type proton ATPase subunit E (202 aa).

The protein belongs to the V-ATPase E subunit family.

Functionally, produces ATP from ADP in the presence of a proton gradient across the membrane. The polypeptide is V-type proton ATPase subunit E (Halothermothrix orenii (strain H 168 / OCM 544 / DSM 9562)).